We begin with the raw amino-acid sequence, 465 residues long: 3-isopropylmalate dehydratase large subunit (465 aa).

Positions 347, 407, and 410 each coordinate [4Fe-4S] cluster.

It belongs to the aconitase/IPM isomerase family. LeuC type 1 subfamily. As to quaternary structure, heterodimer of LeuC and LeuD. [4Fe-4S] cluster is required as a cofactor.

The catalysed reaction is (2R,3S)-3-isopropylmalate = (2S)-2-isopropylmalate. It participates in amino-acid biosynthesis; L-leucine biosynthesis; L-leucine from 3-methyl-2-oxobutanoate: step 2/4. In terms of biological role, catalyzes the isomerization between 2-isopropylmalate and 3-isopropylmalate, via the formation of 2-isopropylmaleate. This Tolumonas auensis (strain DSM 9187 / NBRC 110442 / TA 4) protein is 3-isopropylmalate dehydratase large subunit.